A 382-amino-acid chain; its full sequence is Putative glutamate--cysteine ligase 2-1 (382 aa).

This sequence belongs to the glutamate--cysteine ligase type 2 family. YbdK subfamily.

It carries out the reaction L-cysteine + L-glutamate + ATP = gamma-L-glutamyl-L-cysteine + ADP + phosphate + H(+). In terms of biological role, ATP-dependent carboxylate-amine ligase which exhibits weak glutamate--cysteine ligase activity. The chain is Putative glutamate--cysteine ligase 2-1 from Frankia alni (strain DSM 45986 / CECT 9034 / ACN14a).